Reading from the N-terminus, the 187-residue chain is uncharacterized protein (187 aa).

This is an uncharacterized protein from Manihot esculenta (Cassava).